Here is a 156-residue protein sequence, read N- to C-terminus: MSRRKNVKKRPIPPDPVYNSCLVSMTIRRIMRSGKKSLAANIVYDALKTVGERTGQEPLEVFEKAVKNATPLVEVKARRVGGATYQVPMEVRSNRGSTLALRWLVHYARTRGGKTMAGKLANEIMDAANETGGTIKKREETHRMAEANKAFAHYRY.

It belongs to the universal ribosomal protein uS7 family. In terms of assembly, part of the 30S ribosomal subunit. Contacts proteins S9 and S11.

Its function is as follows. One of the primary rRNA binding proteins, it binds directly to 16S rRNA where it nucleates assembly of the head domain of the 30S subunit. Is located at the subunit interface close to the decoding center, probably blocks exit of the E-site tRNA. This chain is Small ribosomal subunit protein uS7, found in Microcystis aeruginosa (strain NIES-843 / IAM M-2473).